Reading from the N-terminus, the 414-residue chain is Secernin-1 (414 aa).

At alanine 2 the chain carries N-acetylalanine. Cysteine 9 is a catalytic residue.

Belongs to the peptidase C69 family. Secernin subfamily.

It localises to the cytoplasm. Its function is as follows. Regulates exocytosis in mast cells. Increases both the extent of secretion and the sensitivity of mast cells to stimulation with calcium. The chain is Secernin-1 (SCRN1) from Homo sapiens (Human).